The sequence spans 240 residues: Glycerol uptake facilitator protein 3 (240 aa).

Transmembrane regions (helical) follow at residues 11-31 (LGEF…VAGV) and 41-61 (AGWV…VYAS). The short motif at 70 to 72 (NPA) is the NPA 1 element. Helical transmembrane passes span 88–108 (VIPY…VVWL), 137–157 (FWNF…LLAF), and 162–182 (FTAG…GLSL). The NPA 2 signature appears at 191–193 (NPA). A helical membrane pass occupies residues 219–239 (WVPIAGPLVGGALGALLFNVL).

The protein belongs to the MIP/aquaporin (TC 1.A.8) family.

The protein localises to the cell membrane. In terms of biological role, transporter that facilitates the transmembrane diffusion of water, dihydroxyacetone, glycerol and H(2)O(2). Is not permeable to urea and D/L-lactic acid. The protein is Glycerol uptake facilitator protein 3 of Lactiplantibacillus plantarum (strain ATCC BAA-793 / NCIMB 8826 / WCFS1) (Lactobacillus plantarum).